The sequence spans 842 residues: Glycogen phosphorylase, muscle form (842 aa).

An N-acetylserine modification is found at Ser2. Ser15 carries the phosphoserine; by PHK; in form phosphorylase A modification. The AMP site is built by Asp43 and Tyr76. Phosphotyrosine occurs at positions 204 and 227. 310 to 319 (RRFKSSKFGC) lines the AMP pocket. Ser430 is subject to Phosphoserine. Tyr473 carries the post-translational modification Phosphotyrosine. Lys681 bears the N6-(pyridoxal phosphate)lysine mark. 2 positions are modified to phosphoserine: Ser747 and Ser748.

The protein belongs to the glycogen phosphorylase family. Homodimer. Homotetramer; to form the enzymatically active phosphorylase A. Pyridoxal 5'-phosphate is required as a cofactor. Post-translationally, phosphorylation of Ser-15 converts phosphorylase B (unphosphorylated) to phosphorylase A.

The enzyme catalyses [(1-&gt;4)-alpha-D-glucosyl](n) + phosphate = [(1-&gt;4)-alpha-D-glucosyl](n-1) + alpha-D-glucose 1-phosphate. With respect to regulation, allosterically regulated through the non-covalent binding of metabolites, being activated by AMP and inhibited by ATP, ADP, and glucose-6-phosphate. The activity is also controlled by post-translational modifications including phosphorylation. In terms of biological role, allosteric enzyme that catalyzes the rate-limiting step in glycogen catabolism, the phosphorolytic cleavage of glycogen to produce glucose-1-phosphate, and plays a central role in maintaining cellular and organismal glucose homeostasis. The chain is Glycogen phosphorylase, muscle form from Bos taurus (Bovine).